A 347-amino-acid polypeptide reads, in one-letter code: Ribosomal RNA small subunit methyltransferase H (347 aa).

S-adenosyl-L-methionine-binding positions include G47–Y49, D64, F91, D114, and Q121. The interval P291–S347 is disordered.

Belongs to the methyltransferase superfamily. RsmH family.

The protein localises to the cytoplasm. The enzyme catalyses cytidine(1402) in 16S rRNA + S-adenosyl-L-methionine = N(4)-methylcytidine(1402) in 16S rRNA + S-adenosyl-L-homocysteine + H(+). In terms of biological role, specifically methylates the N4 position of cytidine in position 1402 (C1402) of 16S rRNA. The polypeptide is Ribosomal RNA small subunit methyltransferase H (Brucella anthropi (strain ATCC 49188 / DSM 6882 / CCUG 24695 / JCM 21032 / LMG 3331 / NBRC 15819 / NCTC 12168 / Alc 37) (Ochrobactrum anthropi)).